Here is a 299-residue protein sequence, read N- to C-terminus: Regucalcin (299 aa).

Position 18 (E18) interacts with a divalent metal cation. Substrate contacts are provided by R101, N103, and E121. 2 residues coordinate a divalent metal cation: N154 and D204. The Proton donor/acceptor role is filled by D204.

Belongs to the SMP-30/CGR1 family. Requires Zn(2+) as cofactor. The cofactor is Mn(2+). It depends on Ca(2+) as a cofactor. Mg(2+) serves as cofactor. As to expression, expressed in the liver, and in the pronephros from the late tadpole stage.

Its subcellular location is the cytoplasm. The catalysed reaction is D-glucono-1,5-lactone + H2O = D-gluconate + H(+). The protein operates within cofactor biosynthesis; L-ascorbate biosynthesis via UDP-alpha-D-glucuronate pathway; L-ascorbate from UDP-alpha-D-glucuronate: step 3/4. Gluconolactonase with low activity towards other sugar lactones, including gulonolactone and galactonolactone. Catalyzes a key step in ascorbic acid (vitamin C) biosynthesis. Can also hydrolyze diisopropyl phosphorofluoridate and phenylacetate (in vitro). Calcium-binding protein. Modulates Ca(2+) signaling, and Ca(2+)-dependent cellular processes and enzyme activities. The chain is Regucalcin from Xenopus laevis (African clawed frog).